A 288-amino-acid polypeptide reads, in one-letter code: 33 kDa chaperonin (288 aa).

2 disulfides stabilise this stretch: Cys-235–Cys-237 and Cys-268–Cys-271.

This sequence belongs to the HSP33 family. Post-translationally, under oxidizing conditions two disulfide bonds are formed involving the reactive cysteines. Under reducing conditions zinc is bound to the reactive cysteines and the protein is inactive.

It localises to the cytoplasm. Functionally, redox regulated molecular chaperone. Protects both thermally unfolding and oxidatively damaged proteins from irreversible aggregation. Plays an important role in the bacterial defense system toward oxidative stress. The sequence is that of 33 kDa chaperonin from Streptococcus suis (strain 98HAH33).